Reading from the N-terminus, the 918-residue chain is Probable UDP-N-acetylglucosamine--peptide N-acetylglucosaminyltransferase SPINDLY (918 aa).

TPR repeat units lie at residues 34 to 66 (GKEA…SKNV), 67 to 99 (EAHI…DPHN), 101 to 132 (CALT…DPSY), 140 to 171 (ATVL…DPHY), 172 to 205 (APAC…SPTY), 207 to 238 (DAYC…NNMG), 239 to 271 (IALT…NWHY), 273 to 305 (DAMY…NPHC), 306 to 339 (AEAC…KPNF), 341 to 373 (QSLN…NPTY), and 374 to 407 (AEAY…DPDS). Positions 408–918 (RNAGQNRLLA…LNCGDQCFRV (511 aa)) are catalytic region. Over residues 843 to 853 (QLHQQPNTSPQ) the composition is skewed to polar residues. The tract at residues 843 to 877 (QLHQQPNTSPQKLVKDEPADDASGPEHGPASKDNP) is disordered.

This sequence belongs to the glycosyltransferase 41 family. O-GlcNAc transferase subfamily.

Its subcellular location is the nucleus. The catalysed reaction is L-seryl-[protein] + UDP-N-acetyl-alpha-D-glucosamine = 3-O-(N-acetyl-beta-D-glucosaminyl)-L-seryl-[protein] + UDP + H(+). It carries out the reaction L-threonyl-[protein] + UDP-N-acetyl-alpha-D-glucosamine = 3-O-(N-acetyl-beta-D-glucosaminyl)-L-threonyl-[protein] + UDP + H(+). It functions in the pathway protein modification; protein glycosylation. Probable O-linked N-acetylglucosamine transferase (OGT) involved in various processes such as gibberellin (GA) signaling pathway. OGTs catalyze the addition of nucleotide-activated sugars directly onto the polypeptide through O-glycosidic linkage with the hydroxyl of serine or threonine. Probably acts by adding O-linked sugars to yet unknown proteins. May function as a negative regulator of GA signal transduction during vernalization, inhibiting adventitious shoot elongation during vernalization. In Eustoma exaltatum subsp. russellianum (Bluebells), this protein is Probable UDP-N-acetylglucosamine--peptide N-acetylglucosaminyltransferase SPINDLY (SPY).